Here is a 433-residue protein sequence, read N- to C-terminus: Pyrimidine-nucleoside phosphorylase (433 aa).

81-83 (KHS) contacts phosphate. K(+) is bound by residues Gly88 and Thr90. Phosphate-binding positions include Thr92, 108-110 (KMS), and Thr120. Substrate-binding residues include Arg168 and Lys187. K(+) contacts are provided by Leu243, Ala246, and Glu255.

The protein belongs to the thymidine/pyrimidine-nucleoside phosphorylase family. As to quaternary structure, homodimer. K(+) serves as cofactor.

The catalysed reaction is uridine + phosphate = alpha-D-ribose 1-phosphate + uracil. It carries out the reaction thymidine + phosphate = 2-deoxy-alpha-D-ribose 1-phosphate + thymine. The enzyme catalyses 2'-deoxyuridine + phosphate = 2-deoxy-alpha-D-ribose 1-phosphate + uracil. In terms of biological role, catalyzes phosphorolysis of the pyrimidine nucleosides uridine, thymidine and 2'-deoxyuridine with the formation of the corresponding pyrimidine base and ribose-1-phosphate. This chain is Pyrimidine-nucleoside phosphorylase (pdp), found in Staphylococcus aureus (strain Mu50 / ATCC 700699).